The sequence spans 69 residues: Consomatin Be1 (69 aa).

Positions 1–22 (MEMAYWVMVMMMVWITAPLSEG) are cleaved as a signal peptide. Positions 23–57 (GKLNDVIRALAPDDVTPQFILRSLISRRRSDSDVR) are excised as a propeptide. E58 bears the 4-carboxyglutamate mark. C62 and C67 are oxidised to a cystine. Residue W64 is modified to D-tryptophan. 4-hydroxyproline occurs at positions 68 and 69.

The protein belongs to the conotoxin C superfamily. Consomatin family. As to expression, expressed by the venom duct.

It localises to the secreted. Functionally, moderately activates human somatostatin receptors (SSTR) with a preferential activation of SSTR1 and SSTR4. In vivo, does not cause behavioral changes in mice within a few minutes of intracranial injection, but causes a progressive loss of movement thereafter. Four to five hours after injection, mice recover, even with the highest dose tested. Shows antinociception and antihyperalgesia activities in two mouse models of acute pain, most probably by acting outside the central nervous system. The chain is Consomatin Be1 from Conus betulinus (Beech cone).